A 457-amino-acid chain; its full sequence is Cysteine desulfurase (457 aa).

Pyridoxal 5'-phosphate contacts are provided by A127, T128, Q235, S255, and H257. K258 is modified (N6-(pyridoxal phosphate)lysine). T295 provides a ligand contact to pyridoxal 5'-phosphate. C381 acts as the Cysteine persulfide intermediate in catalysis. Residue C381 participates in [2Fe-2S] cluster binding. C381 serves as a coordination point for Zn(2+). Residue C381 is modified to Cysteine persulfide.

The protein belongs to the class-V pyridoxal-phosphate-dependent aminotransferase family. NifS/IscS subfamily. Homodimer. Component of the mitochondrial core iron-sulfur cluster (ISC) complex composed of NFS1, LYRM4, NDUFAB1, ISCU, FXN, and FDX2; this complex is a heterohexamer containing two copies of each monomer. Component of cyteine desulfurase complex composed of NFS1, LYRM4 and NDUFAB1; this complex contributes to the activation of cysteine desulfurase activity and NFS1 stabilization. Interacts (homodimer form) with ISCU (D-state); each monomer interacts with the C-terminal regions of each NFS1 monomer. Interacts with HSPA9. Interacts (via homodimer form) with FDX2. Interacts (via homodimer form) with FXN. Interacts with LYRM4. Component of a complex composed of FXN, NFS1, LYRM4 and ISCU. As to quaternary structure, monomer. Homodimer. Oligomer. Interacts with ISCU. Component of the cysteine desulfurase complex composed of NFS1 and LYRM4; this complex contributes to the activation of cysteine desulfurase activity. Interacts with MOCS3. It depends on pyridoxal 5'-phosphate as a cofactor. In terms of processing, N-gluconoylated. Cysteine persulfide intermediate is reduced by thiol-containing molecules like glutathione and L-cysteine. Persulfide reduction is a rate-limiting step of cysteine desulfurase catalytic cycle. Predominantly expressed in heart and skeletal muscle. Also found in brain, liver and pancreas.

Its subcellular location is the mitochondrion. It is found in the cytoplasm. The protein resides in the nucleus. It localises to the cytoskeleton. The protein localises to the microtubule organizing center. Its subcellular location is the centrosome. It carries out the reaction (sulfur carrier)-H + L-cysteine = (sulfur carrier)-SH + L-alanine. It catalyses the reaction L-cysteinyl-[cysteine desulfurase] + L-cysteine = S-sulfanyl-L-cysteinyl-[cysteine desulfurase] + L-alanine. Its activity is regulated as follows. Active only in complex with LYRM4. Its function is as follows. Cysteine desulfurase, of the core iron-sulfur cluster (ISC) assembly complex, that catalyzes the desulfuration of L-cysteine to L-alanine, as component of the cysteine desulfurase complex, leading to the formation of a cysteine persulfide intermediate at the active site cysteine residue and participates in the [2Fe-2S] clusters assembly on the scaffolding protein ISCU. The persulfide is then transferred on the flexible Cys loop from the catalytic site of NFS1 to the surface of NFS1. After the NFS1-linked persulfide sulfur is transferred to one of the conserved Cys residues of the scaffold, a reaction assisted by FXN. The core iron-sulfur cluster (ISC) assembly complex is involved in the de novo synthesis of a [2Fe-2S] cluster, the first step of the mitochondrial iron-sulfur protein biogenesis. This process is initiated by the cysteine desulfurase complex (NFS1:LYRM4:NDUFAB1) that produces persulfide which is delivered on the scaffold protein ISCU in a FXN-dependent manner. Then this complex is stabilized by FDX2 which provides reducing equivalents to accomplish the [2Fe-2S] cluster assembly. Finally, the [2Fe-2S] cluster is transferred from ISCU to chaperone proteins, including HSCB, HSPA9 and GLRX5. In terms of biological role, may catalyze the desulfuration of L-cysteine to L-alanine as component of the cysteine desulfurase complex (NFS1:LYRM4), leading to the formation of a cysteine persulfide intermediate. Acts as a sulfur donor for MOCS3 by transferring the sulfur of the cysteine persulfide intermediate on MOCS3. In Homo sapiens (Human), this protein is Cysteine desulfurase.